Here is a 131-residue protein sequence, read N- to C-terminus: UPF0102 protein YraN (131 aa).

Belongs to the UPF0102 family.

The protein is UPF0102 protein YraN of Salmonella typhi.